A 170-amino-acid polypeptide reads, in one-letter code: MEFVFYVCSFAAVVSTFFVIIQKNAVYSLVYLIISLLSIAGVFFSLGAFFAGSLEVIIYAGAIIVLFVFVIMMLNISDKYNLEEAHYLKPRFWIGPSILSLILLLSMTYAIFFLRDKKIDGFLIDSKIVGINLFGPYVFLVELSSILLLSALVVIFHIGTEKNVDKNKVL.

Transmembrane regions (helical) follow at residues 1-21 (MEFV…FVII), 30-50 (VYLI…GAFF), 56-76 (VIIY…MLNI), 94-114 (IGPS…IFFL), and 138-158 (VFLV…IFHI).

Belongs to the complex I subunit 6 family. As to quaternary structure, composed of 13 different subunits. Subunits NuoA, H, J, K, L, M, N constitute the membrane sector of the complex.

It is found in the cell membrane. It catalyses the reaction a quinone + NADH + 5 H(+)(in) = a quinol + NAD(+) + 4 H(+)(out). NDH-1 shuttles electrons from NADH, via FMN and iron-sulfur (Fe-S) centers, to quinones in the respiratory chain. Couples the redox reaction to proton translocation (for every two electrons transferred, four hydrogen ions are translocated across the cytoplasmic membrane), and thus conserves the redox energy in a proton gradient. This chain is NADH-quinone oxidoreductase subunit J (nuoJ), found in Buchnera aphidicola subsp. Acyrthosiphon pisum (strain APS) (Acyrthosiphon pisum symbiotic bacterium).